The chain runs to 443 residues: ATP-dependent protease ATPase subunit HslU (443 aa).

ATP is bound by residues Ile18, 60 to 65 (GVGKTE), Asp256, Glu321, and Arg393.

It belongs to the ClpX chaperone family. HslU subfamily. A double ring-shaped homohexamer of HslV is capped on each side by a ring-shaped HslU homohexamer. The assembly of the HslU/HslV complex is dependent on binding of ATP.

It is found in the cytoplasm. Its function is as follows. ATPase subunit of a proteasome-like degradation complex; this subunit has chaperone activity. The binding of ATP and its subsequent hydrolysis by HslU are essential for unfolding of protein substrates subsequently hydrolyzed by HslV. HslU recognizes the N-terminal part of its protein substrates and unfolds these before they are guided to HslV for hydrolysis. The polypeptide is ATP-dependent protease ATPase subunit HslU (Citrobacter koseri (strain ATCC BAA-895 / CDC 4225-83 / SGSC4696)).